We begin with the raw amino-acid sequence, 28 residues long: Conotoxin Cl5.3 (28 aa).

It belongs to the conotoxin T superfamily. Post-translationally, contains 2 disulfide bonds that can be either 'C1-C3, C2-C4' or 'C1-C4, C2-C3', since these disulfide connectivities have been observed for conotoxins with cysteine framework V (for examples, see AC P0DQQ7 and AC P81755). As to expression, expressed by the venom duct.

The protein resides in the secreted. This is Conotoxin Cl5.3 from Californiconus californicus (California cone).